Consider the following 429-residue polypeptide: Serine hydroxymethyltransferase (429 aa).

(6S)-5,6,7,8-tetrahydrofolate is bound at residue 120-122 (GHI). K226 carries the post-translational modification N6-(pyridoxal phosphate)lysine.

It belongs to the SHMT family. In terms of assembly, homodimer. It depends on pyridoxal 5'-phosphate as a cofactor.

The protein localises to the cytoplasm. It functions in the pathway amino-acid biosynthesis; glycine biosynthesis; glycine from L-serine: step 1/1. Functionally, catalyzes the reversible interconversion of serine and glycine with a modified folate serving as the one-carbon carrier. Also exhibits a pteridine-independent aldolase activity toward beta-hydroxyamino acids, producing glycine and aldehydes, via a retro-aldol mechanism. This chain is Serine hydroxymethyltransferase, found in Pyrobaculum arsenaticum (strain DSM 13514 / JCM 11321 / PZ6).